Here is a 154-residue protein sequence, read N- to C-terminus: Ribonuclease H (154 aa).

The 142-residue stretch at 1-142 (MLKKIDLYTD…CDELAREAAS (142 aa)) folds into the RNase H type-1 domain. 4 residues coordinate Mg(2+): Asp10, Glu48, Asp70, and Asp134. The tract at residues 133 to 154 (CDELAREAASGKQLAEDTGYQP) is disordered.

This sequence belongs to the RNase H family. Monomer. The cofactor is Mg(2+).

It is found in the cytoplasm. It carries out the reaction Endonucleolytic cleavage to 5'-phosphomonoester.. Functionally, endonuclease that specifically degrades the RNA of RNA-DNA hybrids. This is Ribonuclease H from Aeromonas hydrophila subsp. hydrophila (strain ATCC 7966 / DSM 30187 / BCRC 13018 / CCUG 14551 / JCM 1027 / KCTC 2358 / NCIMB 9240 / NCTC 8049).